The primary structure comprises 132 residues: Amicyanin (132 aa).

Residues 1–26 (MISAKTLRPAIAAIALFAIGATGAWA) form the signal peptide. Glutamine 27 bears the Pyrrolidone carboxylic acid mark. The Plastocyanin-like domain maps to 27 to 132 (QDKITVTSEK…PFMRGKVIVE (106 aa)). Residues histidine 80, cysteine 119, histidine 122, and methionine 125 each coordinate Cu cation.

Cu cation serves as cofactor.

It is found in the periplasm. It functions in the pathway one-carbon metabolism; methylamine degradation. Primary acceptor of electrons from methylamine dehydrogenase. Passes those electrons on either a soluble cytochrome c or to pseudoazurin. The chain is Amicyanin (mauC) from Paracoccus versutus (Thiobacillus versutus).